The primary structure comprises 151 residues: UPF0208 membrane protein YfbV (151 aa).

Topologically, residues 1–45 (MSTPDNRSVNFFSLFRRGQHYAKTWPMEKRLAPVFVENRVIRMTR) are cytoplasmic. Residues 46-65 (YAIRFMPPVAVFTLCWQIAL) traverse the membrane as a helical segment. At 66-68 (GGQ) the chain is on the periplasmic side. Residues 69 to 91 (LGPAVATALFALSLPMQGLWWLG) traverse the membrane as a helical segment. Residues 92-151 (KRSLTPLPPSILNWFYEVRGKLQEAGQALAPVEGKPDYQALADTLKRAFKQLDKTFLDDL) are Cytoplasmic-facing.

This sequence belongs to the UPF0208 family.

Its subcellular location is the cell inner membrane. The sequence is that of UPF0208 membrane protein YfbV (yfbV) from Salmonella typhi.